The sequence spans 310 residues: S-adenosylmethionine-dependent nucleotide dehydratase (310 aa).

The Radical SAM core domain occupies 3 to 221 (PAIPPTINLH…VERHRKVESS (219 aa)). [4Fe-4S] cluster is bound by residues C17, C21, and C24.

Belongs to the radical SAM superfamily. Viperin family. The cofactor is [4Fe-4S] cluster.

It carries out the reaction GTP + AH2 + S-adenosyl-L-methionine = 3'-deoxy-3',4'-didehydro-GTP + 5'-deoxyadenosine + L-methionine + A + H2O + H(+). Expression of pVip15 in E.coli (strain MG1655) confers resistance to phage T7; prevents culture collapse upon infection. Catalyzes the conversion of guanosine triphosphate (GTP) to 3'-deoxy-3',4'-didehydro-GTP (ddhGTP), probably via a SAM-dependent radical mechanism. The modified nucleotide represses transcription from T7 RNA polymerase-directed genes (possibly by acting as chain terminators), strongly suggesting these nucleotides block viral polymerase transcription. The polypeptide is S-adenosylmethionine-dependent nucleotide dehydratase (Coraliomargarita akajimensis (strain DSM 45221 / IAM 15411 / JCM 23193 / KCTC 12865 / 04OKA010-24)).